A 268-amino-acid polypeptide reads, in one-letter code: Small ribosomal subunit protein uS3 (268 aa).

A KH type-2 domain is found at 38–106 (IRKLLATGME…QVQLNILEVK (69 aa)). A disordered region spans residues 218–268 (VAAPAGDRPRRERPSRPRRSGATGTTATSTEAGRAATATADAPATTEQKEG). Over residues 237–268 (SGATGTTATSTEAGRAATATADAPATTEQKEG) the composition is skewed to low complexity.

It belongs to the universal ribosomal protein uS3 family. As to quaternary structure, part of the 30S ribosomal subunit. Forms a tight complex with proteins S10 and S14.

Its function is as follows. Binds the lower part of the 30S subunit head. Binds mRNA in the 70S ribosome, positioning it for translation. This is Small ribosomal subunit protein uS3 from Rhodococcus jostii (strain RHA1).